The following is a 194-amino-acid chain: ATP-dependent Clp protease proteolytic subunit (194 aa).

The Nucleophile role is filled by serine 98. Histidine 123 is a catalytic residue.

The protein belongs to the peptidase S14 family. As to quaternary structure, fourteen ClpP subunits assemble into 2 heptameric rings which stack back to back to give a disk-like structure with a central cavity, resembling the structure of eukaryotic proteasomes.

Its subcellular location is the cytoplasm. It catalyses the reaction Hydrolysis of proteins to small peptides in the presence of ATP and magnesium. alpha-casein is the usual test substrate. In the absence of ATP, only oligopeptides shorter than five residues are hydrolyzed (such as succinyl-Leu-Tyr-|-NHMec, and Leu-Tyr-Leu-|-Tyr-Trp, in which cleavage of the -Tyr-|-Leu- and -Tyr-|-Trp bonds also occurs).. Cleaves peptides in various proteins in a process that requires ATP hydrolysis. Has a chymotrypsin-like activity. Plays a major role in the degradation of misfolded proteins. The chain is ATP-dependent Clp protease proteolytic subunit from Staphylococcus saprophyticus subsp. saprophyticus (strain ATCC 15305 / DSM 20229 / NCIMB 8711 / NCTC 7292 / S-41).